The chain runs to 184 residues: Large ribosomal subunit protein uL22A (184 aa).

Lysine 46 is covalently cross-linked (Glycyl lysine isopeptide (Lys-Gly) (interchain with G-Cter in ubiquitin)). Residue threonine 70 is modified to Phosphothreonine.

It belongs to the universal ribosomal protein uL22 family. Component of the large ribosomal subunit (LSU). Mature yeast ribosomes consist of a small (40S) and a large (60S) subunit. The 40S small subunit contains 1 molecule of ribosomal RNA (18S rRNA) and 33 different proteins (encoded by 57 genes). The large 60S subunit contains 3 rRNA molecules (25S, 5.8S and 5S rRNA) and 46 different proteins (encoded by 81 genes). uL22 is associated with the polypeptide exit tunnel.

The protein resides in the cytoplasm. Its function is as follows. Component of the ribosome, a large ribonucleoprotein complex responsible for the synthesis of proteins in the cell. The small ribosomal subunit (SSU) binds messenger RNAs (mRNAs) and translates the encoded message by selecting cognate aminoacyl-transfer RNA (tRNA) molecules. The large subunit (LSU) contains the ribosomal catalytic site termed the peptidyl transferase center (PTC), which catalyzes the formation of peptide bonds, thereby polymerizing the amino acids delivered by tRNAs into a polypeptide chain. The nascent polypeptides leave the ribosome through a tunnel in the LSU and interact with protein factors that function in enzymatic processing, targeting, and the membrane insertion of nascent chains at the exit of the ribosomal tunnel. In Saccharomyces cerevisiae (strain ATCC 204508 / S288c) (Baker's yeast), this protein is Large ribosomal subunit protein uL22A.